A 595-amino-acid chain; its full sequence is Chaperone protein HscA homolog (595 aa).

Belongs to the heat shock protein 70 family.

In terms of biological role, chaperone involved in the maturation of iron-sulfur cluster-containing proteins. Has a low intrinsic ATPase activity which is markedly stimulated by HscB. This Rickettsia rickettsii (strain Iowa) protein is Chaperone protein HscA homolog.